The primary structure comprises 79 residues: Pulmonary surfactant-associated protein B (79 aa).

A Saposin B-type domain is found at 4 to 79 (PLPFCWLCRT…VCGLVLRCSS (76 aa)). Intrachain disulfides connect cysteine 8–cysteine 77, cysteine 11–cysteine 71, and cysteine 35–cysteine 46.

In terms of assembly, homodimer; disulfide-linked.

It is found in the secreted. The protein localises to the extracellular space. It localises to the surface film. Functionally, pulmonary surfactant-associated proteins promote alveolar stability by lowering the surface tension at the air-liquid interface in the peripheral air spaces. SP-B increases the collapse pressure of palmitic acid to nearly 70 millinewtons per meter. This chain is Pulmonary surfactant-associated protein B (SFTPB), found in Sus scrofa (Pig).